The following is a 219-amino-acid chain: Probable transaldolase (219 aa).

Lys83 (schiff-base intermediate with substrate) is an active-site residue.

This sequence belongs to the transaldolase family. Type 3B subfamily.

The protein resides in the cytoplasm. The enzyme catalyses D-sedoheptulose 7-phosphate + D-glyceraldehyde 3-phosphate = D-erythrose 4-phosphate + beta-D-fructose 6-phosphate. Its pathway is carbohydrate degradation; pentose phosphate pathway; D-glyceraldehyde 3-phosphate and beta-D-fructose 6-phosphate from D-ribose 5-phosphate and D-xylulose 5-phosphate (non-oxidative stage): step 2/3. Functionally, transaldolase is important for the balance of metabolites in the pentose-phosphate pathway. This Cereibacter sphaeroides (strain ATCC 17025 / ATH 2.4.3) (Rhodobacter sphaeroides) protein is Probable transaldolase.